A 93-amino-acid polypeptide reads, in one-letter code: MKLFLVLIILLFEVLTDGARLKKCFNKVTGYCRKKCKVGERYEIGCLSGKLCCANDEEEKKHVSFKKPHQHSGEKLSVLQDYIILPTITIFTV.

The signal sequence occupies residues 1–18; that stretch reads MKLFLVLIILLFEVLTDG. 3 cysteine pairs are disulfide-bonded: Cys-24–Cys-52, Cys-32–Cys-46, and Cys-36–Cys-53.

Belongs to the beta-defensin family.

The protein resides in the secreted. Has antibacterial activity. The chain is Beta-defensin 128 (DEFB128) from Homo sapiens (Human).